We begin with the raw amino-acid sequence, 179 residues long: Large ribosomal subunit protein uL6 (179 aa).

It belongs to the universal ribosomal protein uL6 family. In terms of assembly, part of the 50S ribosomal subunit.

Functionally, this protein binds to the 23S rRNA, and is important in its secondary structure. It is located near the subunit interface in the base of the L7/L12 stalk, and near the tRNA binding site of the peptidyltransferase center. This is Large ribosomal subunit protein uL6 from Pelobacter propionicus (strain DSM 2379 / NBRC 103807 / OttBd1).